Reading from the N-terminus, the 490-residue chain is Betaine aldehyde dehydrogenase (490 aa).

K(+) is bound by residues Ser26, Ile27, and Asp93. Residue 150–152 (GAW) coordinates NAD(+). Residue Lys162 is the Charge relay system of the active site. Residues 176–179 (KPSE) and 230–233 (GVET) each bind NAD(+). A K(+)-binding site is contributed by Leu246. Glu252 (proton acceptor) is an active-site residue. Residues Gly254, Cys286, and Glu387 each coordinate NAD(+). The active-site Nucleophile is the Cys286. Cys286 carries the post-translational modification Cysteine sulfenic acid (-SOH). 2 residues coordinate K(+): Lys457 and Gly460. Catalysis depends on Glu464, which acts as the Charge relay system.

Belongs to the aldehyde dehydrogenase family. Dimer of dimers. K(+) serves as cofactor.

The catalysed reaction is betaine aldehyde + NAD(+) + H2O = glycine betaine + NADH + 2 H(+). The protein operates within amine and polyamine biosynthesis; betaine biosynthesis via choline pathway; betaine from betaine aldehyde: step 1/1. Functionally, involved in the biosynthesis of the osmoprotectant glycine betaine. Catalyzes the irreversible oxidation of betaine aldehyde to the corresponding acid. This Acinetobacter baumannii (strain ACICU) protein is Betaine aldehyde dehydrogenase.